Here is a 20-residue protein sequence, read N- to C-terminus: D-alpha-glycerophosphatase (20 aa).

As to quaternary structure, monomer. The cofactor is Mg(2+). Mn(2+) is required as a cofactor.

The protein localises to the cytoplasm. It functions in the pathway polyol metabolism; glycerol biosynthesis. The sequence is that of D-alpha-glycerophosphatase from Bacillus licheniformis.